We begin with the raw amino-acid sequence, 910 residues long: Protein translocase subunit SecA (910 aa).

ATP contacts are provided by residues Q89, 107–111 (GEGKT), and D502. Zn(2+)-binding residues include C889, C891, C900, and H901.

This sequence belongs to the SecA family. Monomer and homodimer. Part of the essential Sec protein translocation apparatus which comprises SecA, SecYEG and auxiliary proteins SecDF-YajC and YidC. Zn(2+) is required as a cofactor.

It localises to the cell inner membrane. The protein resides in the cytoplasm. The catalysed reaction is ATP + H2O + cellular proteinSide 1 = ADP + phosphate + cellular proteinSide 2.. Its function is as follows. Part of the Sec protein translocase complex. Interacts with the SecYEG preprotein conducting channel. Has a central role in coupling the hydrolysis of ATP to the transfer of proteins into and across the cell membrane, serving both as a receptor for the preprotein-SecB complex and as an ATP-driven molecular motor driving the stepwise translocation of polypeptide chains across the membrane. In Bartonella bacilliformis (strain ATCC 35685 / KC583 / Herrer 020/F12,63), this protein is Protein translocase subunit SecA.